Reading from the N-terminus, the 290-residue chain is ANSNSRPHLLQTQKPFSVVLAISITFYLLLLNKVNSEEALSFTFTKFVSNQDELLLQGDALVSSKGELQLTRVENGQPIPHSVGRALYSDPVHIWDSSTGSVASFVTSFTFVVEAPNENKTADGIAFFLAPPDTQVQSLGGFLGLFNSSVYNSSNQILAVEFDTFSNSWDPTARHIGIDVNSIESTRTATWGWRNGEVAIVLITYVAPAETLIASLTYPSSQTSYILSAAVDLKSILPEWVRVGFSAATGRSAGYVETHDVLSWSFTSTLETGNSGAKQNNAHLASYALI.

The first 36 residues, 1–36 (ANSNSRPHLLQTQKPFSVVLAISITFYLLLLNKVNS), serve as a signal peptide directing secretion. Residues N119, N147, and N152 are each glycosylated (N-linked (GlcNAc...) asparagine). 2 residues coordinate Mn(2+): E161 and D163. Residues D163, N167, and D170 each coordinate Ca(2+). Residues D170 and H175 each coordinate Mn(2+).

Belongs to the leguminous lectin family. As to quaternary structure, homotetramer.

In terms of biological role, does not have any carbohydrate binding or agglutination activity. The polypeptide is Lectin-related protein (Cladrastis kentukea (Yellow wood)).